Consider the following 249-residue polypeptide: MVEMNFKVDAFEGPLDLLLHLIGQLEVDIYDIPMAEITDQYMEFVHTMQEMELDVASEYLVMAATLLAIKSKMLLPKQELEIDYDTLEEEEDPRDALVEKLMEYKRFKEAAKELKEKEAERSFYFSKPPMDLAEYDDGTKVAELDVSLNDMLSAFNKMLRRKKLNKPLHTRITTQEISIDQRMDSVLEKLNLQVNHRLRFDELFEEQTKEQLVVTFLALLELMKRKLVEVEQAESFADLYVQGKGEEIS.

It belongs to the ScpA family. As to quaternary structure, component of a cohesin-like complex composed of ScpA, ScpB and the Smc homodimer, in which ScpA and ScpB bind to the head domain of Smc. The presence of the three proteins is required for the association of the complex with DNA.

It is found in the cytoplasm. Functionally, participates in chromosomal partition during cell division. May act via the formation of a condensin-like complex containing Smc and ScpB that pull DNA away from mid-cell into both cell halves. This Listeria monocytogenes serotype 4b (strain CLIP80459) protein is Segregation and condensation protein A.